We begin with the raw amino-acid sequence, 145 residues long: MNQTVYLYTDGACKGNPGAGGWGVLMRYGSHEKELFGGEAQTTNNRMELTAVIEGLKSLKRRCTVIICTDSQYVKNGMENWIHGWKRNGWKTASKQPVKNDDLWKELDALVGRHQVSWTWVKGHAGHAENERADDLANRGAAQFS.

An RNase H type-1 domain is found at 1–142 (MNQTVYLYTD…ADDLANRGAA (142 aa)). Residues Asp-10, Glu-48, Asp-70, and Asp-134 each contribute to the Mg(2+) site.

This sequence belongs to the RNase H family. In terms of assembly, monomer. Mg(2+) serves as cofactor.

The protein localises to the cytoplasm. It carries out the reaction Endonucleolytic cleavage to 5'-phosphomonoester.. Its function is as follows. Endonuclease that specifically degrades the RNA of RNA-DNA hybrids. In Neisseria meningitidis serogroup B (strain ATCC BAA-335 / MC58), this protein is Ribonuclease HI.